The chain runs to 465 residues: Ribulose bisphosphate carboxylase large chain (465 aa).

Lys4 carries the N6,N6,N6-trimethyllysine modification. Substrate contacts are provided by Asn113 and Thr163. Residue Lys165 is the Proton acceptor of the active site. Lys167 contributes to the substrate binding site. Residues Lys191, Asp193, and Glu194 each contribute to the Mg(2+) site. At Lys191 the chain carries N6-carboxylysine. Catalysis depends on His284, which acts as the Proton acceptor. Residues Arg285, His317, and Ser369 each contribute to the substrate site.

This sequence belongs to the RuBisCO large chain family. Type I subfamily. Heterohexadecamer of 8 large chains and 8 small chains; disulfide-linked. The disulfide link is formed within the large subunit homodimers. Requires Mg(2+) as cofactor. The disulfide bond which can form in the large chain dimeric partners within the hexadecamer appears to be associated with oxidative stress and protein turnover.

The protein resides in the plastid. It localises to the chloroplast. It carries out the reaction 2 (2R)-3-phosphoglycerate + 2 H(+) = D-ribulose 1,5-bisphosphate + CO2 + H2O. The enzyme catalyses D-ribulose 1,5-bisphosphate + O2 = 2-phosphoglycolate + (2R)-3-phosphoglycerate + 2 H(+). In terms of biological role, ruBisCO catalyzes two reactions: the carboxylation of D-ribulose 1,5-bisphosphate, the primary event in carbon dioxide fixation, as well as the oxidative fragmentation of the pentose substrate in the photorespiration process. Both reactions occur simultaneously and in competition at the same active site. This Casuarina equisetifolia (Beach she-oak) protein is Ribulose bisphosphate carboxylase large chain.